A 118-amino-acid polypeptide reads, in one-letter code: Small ribosomal subunit protein uS13 (118 aa).

Positions 94-118 (GLPVRGQRTKTNARTRKGPRKPIKK) are disordered.

This sequence belongs to the universal ribosomal protein uS13 family. As to quaternary structure, part of the 30S ribosomal subunit. Forms a loose heterodimer with protein S19. Forms two bridges to the 50S subunit in the 70S ribosome.

In terms of biological role, located at the top of the head of the 30S subunit, it contacts several helices of the 16S rRNA. In the 70S ribosome it contacts the 23S rRNA (bridge B1a) and protein L5 of the 50S subunit (bridge B1b), connecting the 2 subunits; these bridges are implicated in subunit movement. Contacts the tRNAs in the A and P-sites. This chain is Small ribosomal subunit protein uS13, found in Pasteurella multocida (strain Pm70).